The following is a 325-amino-acid chain: tRNA(Ile)-lysidine synthase (325 aa).

An ATP-binding site is contributed by 34-39; sequence SGGADS.

It belongs to the tRNA(Ile)-lysidine synthase family.

The protein localises to the cytoplasm. The catalysed reaction is cytidine(34) in tRNA(Ile2) + L-lysine + ATP = lysidine(34) in tRNA(Ile2) + AMP + diphosphate + H(+). Functionally, ligates lysine onto the cytidine present at position 34 of the AUA codon-specific tRNA(Ile) that contains the anticodon CAU, in an ATP-dependent manner. Cytidine is converted to lysidine, thus changing the amino acid specificity of the tRNA from methionine to isoleucine. The sequence is that of tRNA(Ile)-lysidine synthase from Rhodococcus opacus (strain B4).